A 497-amino-acid chain; its full sequence is Pentatricopeptide repeat-containing protein At2g36240 (497 aa).

9 PPR repeats span residues Leu156 to Leu186, Asn192 to Pro226, Asp227 to Pro261, Asn262 to Phe296, Ser297 to Pro331, Ser332 to Pro366, Cys367 to Pro401, Asp402 to Pro436, and Asp437 to Pro471.

Belongs to the PPR family. P subfamily.

The chain is Pentatricopeptide repeat-containing protein At2g36240 from Arabidopsis thaliana (Mouse-ear cress).